Reading from the N-terminus, the 536-residue chain is G-protein coupled receptor Mth2 (536 aa).

5 disulfides stabilise this stretch: cysteine 17/cysteine 71, cysteine 73/cysteine 78, cysteine 82/cysteine 177, cysteine 83/cysteine 96, and cysteine 138/cysteine 197. N-linked (GlcNAc...) asparagine glycosylation is found at asparagine 24 and asparagine 33. N-linked (GlcNAc...) asparagine glycans are attached at residues asparagine 103, asparagine 113, asparagine 118, asparagine 159, and asparagine 184. The chain crosses the membrane as a helical span at residues tyrosine 212–proline 232. The Cytoplasmic portion of the chain corresponds to glutamate 233–serine 241. A helical transmembrane segment spans residues leucine 242–tyrosine 262. Over glutamine 263–valine 273 the chain is Extracellular. Residues phenylalanine 274–phenylalanine 294 form a helical membrane-spanning segment. At aspartate 295 to arginine 314 the chain is on the cytoplasmic side. Residues phenylalanine 315–cysteine 335 traverse the membrane as a helical segment. The Extracellular segment spans residues alanine 336 to alanine 365. A helical transmembrane segment spans residues methionine 366–methionine 386. The Cytoplasmic segment spans residues threonine 387–lysine 417. Residues phenylalanine 418–serine 438 form a helical membrane-spanning segment. At tyrosine 439–lysine 449 the chain is on the extracellular side. The helical transmembrane segment at leucine 450–valine 470 threads the bilayer. Topologically, residues methionine 471–arginine 536 are cytoplasmic. Positions arginine 487–valine 506 are disordered. Over residues glutamine 492 to serine 505 the composition is skewed to low complexity.

The protein belongs to the G-protein coupled receptor 2 family. Mth subfamily. In terms of assembly, homodimer.

The protein resides in the cell membrane. Functionally, involved in biological aging and stress response. Essential for adult survival. This chain is G-protein coupled receptor Mth2 (mth2), found in Drosophila simulans (Fruit fly).